A 251-amino-acid polypeptide reads, in one-letter code: HTH-type transcriptional regulator UlaR (251 aa).

Residues 3-58 enclose the HTH deoR-type domain; the sequence is EAQRHQILLEMLAQLGFVTVEKVVERLGISPATARRDINKLDERGKLKKVRNGAEA. Residues 20–39 constitute a DNA-binding region (H-T-H motif); the sequence is VTVEKVVERLGISPATARRD.

It localises to the cytoplasm. Represses ulaG and the ulaABCDEF operon. The chain is HTH-type transcriptional regulator UlaR from Shigella sonnei (strain Ss046).